A 417-amino-acid chain; its full sequence is S-adenosylmethionine synthase (417 aa).

Histidine 16 contributes to the ATP binding site. Position 18 (aspartate 18) interacts with Mg(2+). Glutamate 44 contacts K(+). Residues glutamate 57 and glutamine 100 each coordinate L-methionine. Positions 100–110 are flexible loop; it reads QSPDIAQGVTS. ATP contacts are provided by residues 175–177, 251–252, aspartate 260, 266–267, alanine 283, and lysine 287; these read DGK, KF, and RK. L-methionine is bound at residue aspartate 260. An L-methionine-binding site is contributed by lysine 291.

It belongs to the AdoMet synthase family. Homotetramer; dimer of dimers. Mg(2+) is required as a cofactor. The cofactor is K(+).

Its subcellular location is the cytoplasm. It catalyses the reaction L-methionine + ATP + H2O = S-adenosyl-L-methionine + phosphate + diphosphate. It participates in amino-acid biosynthesis; S-adenosyl-L-methionine biosynthesis; S-adenosyl-L-methionine from L-methionine: step 1/1. In terms of biological role, catalyzes the formation of S-adenosylmethionine (AdoMet) from methionine and ATP. The overall synthetic reaction is composed of two sequential steps, AdoMet formation and the subsequent tripolyphosphate hydrolysis which occurs prior to release of AdoMet from the enzyme. The protein is S-adenosylmethionine synthase of Picosynechococcus sp. (strain ATCC 27264 / PCC 7002 / PR-6) (Agmenellum quadruplicatum).